A 478-amino-acid chain; its full sequence is Ribosomal RNA small subunit methyltransferase F (478 aa).

Residues 123 to 129, glutamate 147, aspartate 174, and aspartate 192 contribute to the S-adenosyl-L-methionine site; that span reads AAAPGSK. Cysteine 245 functions as the Nucleophile in the catalytic mechanism.

It belongs to the class I-like SAM-binding methyltransferase superfamily. RsmB/NOP family.

It is found in the cytoplasm. It catalyses the reaction cytidine(1407) in 16S rRNA + S-adenosyl-L-methionine = 5-methylcytidine(1407) in 16S rRNA + S-adenosyl-L-homocysteine + H(+). In terms of biological role, specifically methylates the cytosine at position 1407 (m5C1407) of 16S rRNA. This Vibrio parahaemolyticus serotype O3:K6 (strain RIMD 2210633) protein is Ribosomal RNA small subunit methyltransferase F.